Consider the following 348-residue polypeptide: uncharacterized protein (348 aa).

The interval 132–348 is disordered; the sequence is SECRRSSDAL…QGTRRDSARL (217 aa). Positions 161-178 are enriched in low complexity; sequence STAPIPNAAISSARSSAR. The segment covering 192-207 has biased composition (polar residues); that stretch reads SRSSSETRSPGGTVQP. Positions 227–273 are enriched in low complexity; it reads AAGSLLPAPRPPASSASSPQAAAPAAPSATRLPRRTTPSAPRPSSRP. Positions 274-287 are enriched in pro residues; it reads ARPPIPAARPPPRR. Positions 288–310 are enriched in low complexity; sequence TPGTPRPAAARARAPAGCSPARR.

This is an uncharacterized protein from Streptomyces fradiae (Streptomyces roseoflavus).